The chain runs to 185 residues: Large ribosomal subunit protein uL6 (185 aa).

Belongs to the universal ribosomal protein uL6 family. In terms of assembly, part of the 50S ribosomal subunit.

Its function is as follows. This protein binds to the 23S rRNA, and is important in its secondary structure. It is located near the subunit interface in the base of the L7/L12 stalk, and near the tRNA binding site of the peptidyltransferase center. This is Large ribosomal subunit protein uL6 from Deinococcus deserti (strain DSM 17065 / CIP 109153 / LMG 22923 / VCD115).